The following is a 183-amino-acid chain: Proton-transporting V-type ATPase complex assembly regulator TMEM9 (183 aa).

An N-terminal signal peptide occupies residues 1–20 (MKLLSLVAVVGCLLVPPAEA). N-linked (GlcNAc...) asparagine glycans are attached at residues Asn21, Asn38, and Asn47. Residues 21–89 (NKSSEDIRCK…YEERSTTTIK (69 aa)) are Extracellular-facing. A helical membrane pass occupies residues 90-110 (VIIVIYLSVVGALLLYMAFLM). Residues 111–183 (LVDPLIRKPD…TVFDRHKMLS (73 aa)) lie on the Cytoplasmic side of the membrane. Phosphoserine occurs at positions 137 and 144.

This sequence belongs to the TMEM9 family. Interacts with the v-ATPase accessory protein ATP6AP2 and with the v-ATPase complex subunit ATP6V0D1; these interactions lead to the assembly of the v-ATPase complex. N-glycosylated. As to expression, highly expressed in adrenal gland, thyroid gland, testis, ovary and prostate. Moderate expression in trachea, spinal cord, stomach, colon, small intestine and spleen. Low expression in bone marrow, lymph node, thymus and peripheral blood lymphocytes. Expression is detected in hematopoietic cell lines including those of myeloid, erythroid, B- and T-cell origin.

The protein localises to the lysosome membrane. The protein resides in the late endosome membrane. Its subcellular location is the endosome. It localises to the multivesicular body membrane. Transmembrane protein that binds to and facilitates the assembly of lysosomal proton-transporting V-type ATPase (v-ATPase), resulting in enhanced lysosomal acidification and trafficking. By bringing the v-ATPase accessory protein ATP6AP2 and the v-ATPase subunit ATP6V0D1 together, allows v-ATPase complex formation and activation. TMEM9-controlled vesicular acidification induces hyperactivation of Wnt/beta-catenin signaling, involved in development, tissue homeostasis and tissue regeneration, through lysosomal degradation of adenomatous polyposis coli/APC. In the liver, involved in hepatic regeneration. This Homo sapiens (Human) protein is Proton-transporting V-type ATPase complex assembly regulator TMEM9.